The sequence spans 98 residues: NADH-ubiquinone oxidoreductase chain 4L (98 aa).

Transmembrane regions (helical) follow at residues 1–21 (MPFI…GLLM), 29–49 (SLLC…LLCL), and 61–81 (MILL…LVMV).

It belongs to the complex I subunit 4L family. As to quaternary structure, core subunit of respiratory chain NADH dehydrogenase (Complex I) which is composed of 45 different subunits.

Its subcellular location is the mitochondrion inner membrane. It catalyses the reaction a ubiquinone + NADH + 5 H(+)(in) = a ubiquinol + NAD(+) + 4 H(+)(out). Functionally, core subunit of the mitochondrial membrane respiratory chain NADH dehydrogenase (Complex I) which catalyzes electron transfer from NADH through the respiratory chain, using ubiquinone as an electron acceptor. Part of the enzyme membrane arm which is embedded in the lipid bilayer and involved in proton translocation. This chain is NADH-ubiquinone oxidoreductase chain 4L (MT-ND4L), found in Dugong dugon (Dugong).